Reading from the N-terminus, the 100-residue chain is Small ribosomal subunit protein bS20 (100 aa).

It belongs to the bacterial ribosomal protein bS20 family.

Its function is as follows. Binds directly to 16S ribosomal RNA. In Synechococcus sp. (strain JA-3-3Ab) (Cyanobacteria bacterium Yellowstone A-Prime), this protein is Small ribosomal subunit protein bS20.